A 513-amino-acid chain; its full sequence is Serine/threonine-protein kinase UL13 homolog (513 aa).

A disordered region spans residues 1 to 27 (MDTESKNKKTTNGGENSNCSHSTRTPD). The segment covering 10-23 (TTNGGENSNCSHST) has biased composition (polar residues). A Protein kinase domain is found at 145–487 (KEMPIYAGSG…FDSLNIFPYL (343 aa)). Residues 151–159 (AGSGSYGVV) and K170 each bind ATP. The Proton acceptor role is filled by D268.

Belongs to the protein kinase superfamily. Ser/Thr protein kinase family. Autophosphorylated.

It localises to the virion tegument. The protein resides in the host nucleus. The catalysed reaction is L-seryl-[protein] + ATP = O-phospho-L-seryl-[protein] + ADP + H(+). It carries out the reaction L-threonyl-[protein] + ATP = O-phospho-L-threonyl-[protein] + ADP + H(+). In terms of biological role, multifunctional serine/threonine kinase that plays a role in several processes including egress of virus particles from the nucleus, modulation of the actin cytoskeleton and regulation of viral and cellular gene expression. In Gallid herpesvirus 2 (strain Chicken/Md5/ATCC VR-987) (GaHV-2), this protein is Serine/threonine-protein kinase UL13 homolog (MDV025).